The sequence spans 189 residues: Peptidyl-tRNA hydrolase (189 aa).

Residue Tyr14 participates in tRNA binding. Residue His19 is the Proton acceptor of the active site. Tyr64, Asn66, and Asn112 together coordinate tRNA.

It belongs to the PTH family. As to quaternary structure, monomer.

It localises to the cytoplasm. It catalyses the reaction an N-acyl-L-alpha-aminoacyl-tRNA + H2O = an N-acyl-L-amino acid + a tRNA + H(+). In terms of biological role, hydrolyzes ribosome-free peptidyl-tRNAs (with 1 or more amino acids incorporated), which drop off the ribosome during protein synthesis, or as a result of ribosome stalling. Catalyzes the release of premature peptidyl moieties from peptidyl-tRNA molecules trapped in stalled 50S ribosomal subunits, and thus maintains levels of free tRNAs and 50S ribosomes. The sequence is that of Peptidyl-tRNA hydrolase from Dehalococcoides mccartyi (strain ATCC BAA-2100 / JCM 16839 / KCTC 5957 / BAV1).